Consider the following 117-residue polypeptide: Photosystem II reaction center Psb28 protein (117 aa).

It belongs to the Psb28 family. In terms of assembly, part of the photosystem II complex.

Its subcellular location is the cellular thylakoid membrane. The protein is Photosystem II reaction center Psb28 protein of Prochlorococcus marinus (strain AS9601).